A 366-amino-acid polypeptide reads, in one-letter code: Pyrimidine monooxygenase RutA (366 aa).

Residues 49-50 (IK), asparagine 115, glutamate 124, 140-141 (RY), and serine 190 contribute to the FMN site.

Belongs to the NtaA/SnaA/DszA monooxygenase family. RutA subfamily.

It carries out the reaction uracil + FMNH2 + NADH + O2 = (Z)-3-ureidoacrylate + FMN + NAD(+) + H2O + H(+). It catalyses the reaction thymine + FMNH2 + NADH + O2 = (Z)-2-methylureidoacrylate + FMN + NAD(+) + H2O + H(+). Functionally, catalyzes the pyrimidine ring opening between N-3 and C-4 by an unusual flavin hydroperoxide-catalyzed mechanism, adding oxygen atoms in the process to yield ureidoacrylate peracid, that immediately reacts with FMN forming ureidoacrylate and FMN-N(5)-oxide. The FMN-N(5)-oxide reacts spontaneously with NADH to produce FMN. Requires the flavin reductase RutF to regenerate FMN in vivo. This is Pyrimidine monooxygenase RutA from Serratia proteamaculans (strain 568).